The primary structure comprises 242 residues: MLHLEDDNGRQRSVIANLQKFVYCCLYLRFIKDGSLFLILLGWIISSLCDFIQELTLRYLKKNYLEVGRDNDQEDDESLAIRGLETPIVRMIINKAIRYYQGLILLETAYCIVYHIRLDVSRDICSKPYGFVIMLLIREFTCPVPTAFPSKLLLVLLDILLLFCQIVIINGSLSSSLQNVKLIVKELNAEEEGALNILKLNTWHMDATGPELIVLKNHDKSIPQQADGDDATEITPLLNIAE.

The next 2 membrane-spanning stretches (helical) occupy residues 128–148 (PYGF…PTAF) and 152–172 (LLLV…INGS).

In terms of assembly, part of the vacuole-localized DSC E3 ligase complex composed of at least TUL1, DSC2, DSC3, UBX3, CDC48 and VLD1.

Its subcellular location is the vacuole membrane. Component of the vacuole-localized DSC E3 ubiquitin ligase complex involved in the targeting of the complex to the vacuole membrane via the AP3 pathway to ubiquinate vacuolar membrane proteins. Competes with GLD1 to determine the subcellular localizations of the DSC complex. The sequence is that of Vacuole localized DSC protein 1 from Saccharomyces cerevisiae (strain ATCC 204508 / S288c) (Baker's yeast).